The primary structure comprises 273 residues: Anthranilate synthase beta subunit 2, chloroplastic (273 aa).

Residues 1 to 47 constitute a chloroplast transit peptide; the sequence is MATAARLLPKIQSPASPAVAEARRRRPSSLRLGVTSGPARTLKQKLV. The disordered stretch occupies residues 15–35; sequence ASPAVAEARRRRPSSLRLGVT. One can recognise a Glutamine amidotransferase type-1 domain in the interval 70-269; it reads PIIVIDNYDS…IKIIEGYEAL (200 aa). 121 to 123 is an L-glutamine binding site; the sequence is GPG. Cysteine 148 serves as the catalytic Nucleophile. L-glutamine contacts are provided by residues glutamine 152 and 202 to 203; that span reads SL. Residues histidine 243 and glutamate 245 contribute to the active site.

Heterotetramer consisting of two non-identical subunits: a beta subunit and a large alpha subunit. In terms of tissue distribution, expressed in roots and leaves.

The protein localises to the plastid. Its subcellular location is the chloroplast. It catalyses the reaction chorismate + L-glutamine = anthranilate + pyruvate + L-glutamate + H(+). Its pathway is amino-acid biosynthesis; L-tryptophan biosynthesis; L-tryptophan from chorismate: step 1/5. In terms of biological role, part of a heterotetrameric complex that catalyzes the two-step biosynthesis of anthranilate, an intermediate in the biosynthesis of L-tryptophan. In the first step, the glutamine-binding beta subunit of anthranilate synthase (AS) provides the glutamine amidotransferase activity which generates ammonia as a substrate that, along with chorismate, is used in the second step, catalyzed by the large alpha subunit of AS to produce anthranilate. This chain is Anthranilate synthase beta subunit 2, chloroplastic, found in Oryza sativa subsp. japonica (Rice).